A 261-amino-acid polypeptide reads, in one-letter code: 3-deoxy-manno-octulosonate cytidylyltransferase (261 aa).

Belongs to the KdsB family.

The protein resides in the cytoplasm. It catalyses the reaction 3-deoxy-alpha-D-manno-oct-2-ulosonate + CTP = CMP-3-deoxy-beta-D-manno-octulosonate + diphosphate. Its pathway is nucleotide-sugar biosynthesis; CMP-3-deoxy-D-manno-octulosonate biosynthesis; CMP-3-deoxy-D-manno-octulosonate from 3-deoxy-D-manno-octulosonate and CTP: step 1/1. It functions in the pathway bacterial outer membrane biogenesis; lipopolysaccharide biosynthesis. Its function is as follows. Activates KDO (a required 8-carbon sugar) for incorporation into bacterial lipopolysaccharide in Gram-negative bacteria. The sequence is that of 3-deoxy-manno-octulosonate cytidylyltransferase from Dechloromonas aromatica (strain RCB).